The primary structure comprises 160 residues: MRCPNCNSLDTQVKDSRPTEDSSVIRRRRVCIACNFRFTTFERVQLRELIVIKRNGRRVPFDRDKLMRSVQISLRKRPVDPERVEQMVSAIVRELESGGEAEISSETIGESVMDHLRKLDDVAYVRFASVYRNFREAKDFEAVLGELSHEDEARAALVRK.

Residues 1-11 are compositionally biased toward polar residues; that stretch reads MRCPNCNSLDT. Residues 1–20 form a disordered region; sequence MRCPNCNSLDTQVKDSRPTE. Residues 3-34 fold into a zinc finger; the sequence is CPNCNSLDTQVKDSRPTEDSSVIRRRRVCIAC. Residues 49-139 form the ATP-cone domain; it reads LIVIKRNGRR…VYRNFREAKD (91 aa).

The protein belongs to the NrdR family. Zn(2+) is required as a cofactor.

In terms of biological role, negatively regulates transcription of bacterial ribonucleotide reductase nrd genes and operons by binding to NrdR-boxes. The sequence is that of Transcriptional repressor NrdR from Rhodopseudomonas palustris (strain ATCC BAA-98 / CGA009).